Consider the following 430-residue polypeptide: Divergent protein kinase domain 2A (430 aa).

Positions 1–35 (MWRLVPLKLGRLSRALKLAALGSLLVLMLLHSPSL) are cleaved as a signal peptide.

It belongs to the DIPK family. In terms of tissue distribution, expressed in heart, brain, liver, spleen, kidney, lung, thymus, testis, ovary and muscle.

Its subcellular location is the golgi apparatus. The protein resides in the cytoplasmic vesicle. The protein localises to the COPI-coated vesicle. It localises to the secreted. In terms of biological role, may play a role in cardiomyocyte proliferation through paracrine signaling and activation of the PI3-kinase signaling cascade. The polypeptide is Divergent protein kinase domain 2A (Dipk2a) (Mus musculus (Mouse)).